Consider the following 95-residue polypeptide: uncharacterized protein (95 aa).

An N-terminal signal peptide occupies residues 1–21 (MKVLSISLIFFALLLTGCSQV).

This is an uncharacterized protein from Archaeoglobus fulgidus (strain ATCC 49558 / DSM 4304 / JCM 9628 / NBRC 100126 / VC-16).